Reading from the N-terminus, the 284-residue chain is Pantothenate synthetase (284 aa).

30–37 (MGALHNGH) provides a ligand contact to ATP. Histidine 37 acts as the Proton donor in catalysis. A (R)-pantoate-binding site is contributed by glutamine 61. Glutamine 61 contacts beta-alanine. Position 147–150 (147–150 (GEKD)) interacts with ATP. A (R)-pantoate-binding site is contributed by glutamine 153. ATP contacts are provided by residues leucine 176 and 184 to 187 (SSSR).

It belongs to the pantothenate synthetase family. Homodimer.

It is found in the cytoplasm. The enzyme catalyses (R)-pantoate + beta-alanine + ATP = (R)-pantothenate + AMP + diphosphate + H(+). It functions in the pathway cofactor biosynthesis; (R)-pantothenate biosynthesis; (R)-pantothenate from (R)-pantoate and beta-alanine: step 1/1. Its function is as follows. Catalyzes the condensation of pantoate with beta-alanine in an ATP-dependent reaction via a pantoyl-adenylate intermediate. This Bartonella henselae (strain ATCC 49882 / DSM 28221 / CCUG 30454 / Houston 1) (Rochalimaea henselae) protein is Pantothenate synthetase.